Reading from the N-terminus, the 411-residue chain is Serpin A3-5 (411 aa).

The signal sequence occupies residues 1-24; the sequence is MRAERTSFLLALGLLMAGIRSVHC. N-linked (GlcNAc...) asparagine glycans are attached at residues asparagine 100, asparagine 180, asparagine 230, asparagine 264, and asparagine 318.

Belongs to the serpin family. Homodimer.

It is found in the cytoplasmic vesicle. It localises to the secretory vesicle. The protein resides in the chromaffin granule. The protein localises to the secreted. In terms of biological role, serine protease inhibitor. The chain is Serpin A3-5 from Bos taurus (Bovine).